The primary structure comprises 419 residues: Serine hydroxymethyltransferase (419 aa).

Residues leucine 121 and 125–127 (GHL) each bind (6S)-5,6,7,8-tetrahydrofolate. Lysine 229 is modified (N6-(pyridoxal phosphate)lysine). 354–356 (SPF) lines the (6S)-5,6,7,8-tetrahydrofolate pocket.

The protein belongs to the SHMT family. In terms of assembly, homodimer. Pyridoxal 5'-phosphate serves as cofactor.

Its subcellular location is the cytoplasm. It catalyses the reaction (6R)-5,10-methylene-5,6,7,8-tetrahydrofolate + glycine + H2O = (6S)-5,6,7,8-tetrahydrofolate + L-serine. Its pathway is one-carbon metabolism; tetrahydrofolate interconversion. It functions in the pathway amino-acid biosynthesis; glycine biosynthesis; glycine from L-serine: step 1/1. In terms of biological role, catalyzes the reversible interconversion of serine and glycine with tetrahydrofolate (THF) serving as the one-carbon carrier. This reaction serves as the major source of one-carbon groups required for the biosynthesis of purines, thymidylate, methionine, and other important biomolecules. Also exhibits THF-independent aldolase activity toward beta-hydroxyamino acids, producing glycine and aldehydes, via a retro-aldol mechanism. The polypeptide is Serine hydroxymethyltransferase (Coxiella burnetii (strain CbuG_Q212) (Coxiella burnetii (strain Q212))).